A 140-amino-acid polypeptide reads, in one-letter code: uncharacterized protein (140 aa).

A run of 4 helical transmembrane segments spans residues 4–24, 56–76, 84–104, and 109–129; these read LLLA…SFSG, EAFI…YLLW, SAAA…LFFS, and IRDV…YVLA.

The protein resides in the cell membrane. In terms of biological role, may be important for peptidoglycan remodeling. This is an uncharacterized protein from Bacillus subtilis (strain 168).